The sequence spans 472 residues: Eukaryotic translation initiation factor 2 subunit 3 (472 aa).

The region spanning 39-247 is the tr-type G domain; sequence QATINIGTIG…YIVNKIPVPV (209 aa). The segment at 48–55 is G1; the sequence is GHVAHGKS. 51-56 contacts GTP; the sequence is AHGKST. Positions 76-80 are G2; it reads NITIK. The tract at residues 134–137 is G3; the sequence is DCPG. Residues 190 to 193 and 225 to 227 contribute to the GTP site; these read NKID and SAQ. The segment at 190–193 is G4; that stretch reads NKID. The G5 stretch occupies residues 225–227; sequence SAQ. The segment at 457–469 is interacts with cdc123; it reads GQIRRGVTITPTV.

It belongs to the TRAFAC class translation factor GTPase superfamily. Classic translation factor GTPase family. EIF2G subfamily. Eukaryotic translation initiation factor 2 eIF2 is a heterotrimeric complex composed of an alpha (EIF2S1), a beta (EIF2S2) and a gamma (EIF2S3) chain. eIF2 is member of the 43S pre-initiation complex (43S PIC).

It localises to the cytoplasm. Its subcellular location is the cytosol. It carries out the reaction GTP + H2O = GDP + phosphate + H(+). In terms of biological role, member of the eIF2 complex that functions in the early steps of protein synthesis by forming a ternary complex with GTP and initiator tRNA. This complex binds to a 40S ribosomal subunit, followed by mRNA binding to form the 43S pre-initiation complex (43S PIC). Junction of the 60S ribosomal subunit to form the 80S initiation complex is preceded by hydrolysis of the GTP bound to eIF2 and release of an eIF2-GDP binary complex. In order for eIF2 to recycle and catalyze another round of initiation, the GDP bound to eIF2 must exchange with GTP by way of a reaction catalyzed by eIF-2B. This Danio rerio (Zebrafish) protein is Eukaryotic translation initiation factor 2 subunit 3.